A 1213-amino-acid polypeptide reads, in one-letter code: DNA-directed RNA polymerase subunit beta' (1213 aa).

4 residues coordinate Zn(2+): Cys60, Cys62, Cys75, and Cys78. 3 residues coordinate Mg(2+): Asp450, Asp452, and Asp454. Residues Cys819, Cys893, Cys900, and Cys903 each coordinate Zn(2+).

This sequence belongs to the RNA polymerase beta' chain family. The RNAP catalytic core consists of 2 alpha, 1 beta, 1 beta' and 1 omega subunit. When a sigma factor is associated with the core the holoenzyme is formed, which can initiate transcription. The cofactor is Mg(2+). Requires Zn(2+) as cofactor.

The enzyme catalyses RNA(n) + a ribonucleoside 5'-triphosphate = RNA(n+1) + diphosphate. DNA-dependent RNA polymerase catalyzes the transcription of DNA into RNA using the four ribonucleoside triphosphates as substrates. This is DNA-directed RNA polymerase subunit beta' from Streptococcus pyogenes serotype M18 (strain MGAS8232).